A 461-amino-acid chain; its full sequence is Cysteine--tRNA ligase (461 aa).

C29 contacts Zn(2+). The 'HIGH' region signature appears at M31–H41. 3 residues coordinate Zn(2+): C210, H235, and E239. The 'KMSKS' region motif lies at K267–S271. An ATP-binding site is contributed by K270.

This sequence belongs to the class-I aminoacyl-tRNA synthetase family. As to quaternary structure, monomer. It depends on Zn(2+) as a cofactor.

The protein localises to the cytoplasm. The enzyme catalyses tRNA(Cys) + L-cysteine + ATP = L-cysteinyl-tRNA(Cys) + AMP + diphosphate. The chain is Cysteine--tRNA ligase from Stutzerimonas stutzeri (strain A1501) (Pseudomonas stutzeri).